Consider the following 228-residue polypeptide: MAAELESSLELSFTGSGTVPGGGLPPARSRIFKIIVIGDSNVGKTCLTYRFCAGRFPQRTEATIGVDFRERAVTIDGERIKIQLWDTAGQERFRKSMVQHYYRNVHAVVFVYDMTNLASFHSLPSWIEECKQHLLTNDIPRILVGNKCDLRNAIQVPTDLAQKFADTHSMPLFETSAKNPNDNDHVEAIFMTLAHKLKSHKPLMLSQPPDRDQIHIKPEPKPAMTCWC.

8 residues coordinate GTP: Asn41, Val42, Gly43, Lys44, Thr45, Cys46, Thr60, and Thr63. Position 45 (Thr45) interacts with Mg(2+). The Switch 1 motif lies at 54 to 66 (GRFPQRTEATIGV). Mg(2+) is bound by residues Thr63 and Asp86. A Switch 2 motif is present at residues 87 to 106 (TAGQERFRKSMVQHYYRNVH). GTP-binding residues include Gly89, Asn146, Lys147, Asp149, Ala177, and Lys178. S-geranylgeranyl cysteine attachment occurs at residues Cys226 and Cys228. Residue Cys228 is modified to Cysteine methyl ester.

Belongs to the small GTPase superfamily. Rab family. As to quaternary structure, interacts (GTP- and GDP-bound forms) with ATG16L1; the complex consists of a tetramer where two RAB33B molecules bind independently one molecule of the ATG16L1 homodimer; the interaction promotes ATG12-ATG5-ATG16L1 complex recruitment to phagophores. Interacts with ATG16L2; however interaction is approximately hundred times lower than for ATG16L1. Interacts with RIC1 (via C-terminus domain); the interaction is direct with a preference for RAB33B-GTP. Interacts with RGP1. It depends on Mg(2+) as a cofactor.

Its subcellular location is the golgi apparatus membrane. It localises to the golgi apparatus. The protein localises to the cis-Golgi network. It is found in the preautophagosomal structure membrane. The enzyme catalyses GTP + H2O = GDP + phosphate + H(+). Regulated by guanine nucleotide exchange factors (GEFs) which promote the exchange of bound GDP for free GTP. Regulated by GTPase activating proteins (GAPs) such as SGSM2 which increase the GTP hydrolysis activity. Inhibited by GDP dissociation inhibitors (GDIs). Functionally, the small GTPases Rab are key regulators of intracellular membrane trafficking, from the formation of transport vesicles to their fusion with membranes. Rabs cycle between an inactive GDP-bound form and an active GTP-bound form that is able to recruit to membranes different sets of downstream effectors directly responsible for vesicle formation, movement, tethering and fusion. RAB33B acts, in coordination with RAB6A, to regulate intra-Golgi retrograde trafficking. Participates in autophagosome formation by recruiting the ATG12-ATG5-ATG16L1 complex to phagophores, probably in a nucleotide-independent manner. The protein is Ras-related protein Rab-33B (RAB33B) of Gallus gallus (Chicken).